Here is a 496-residue protein sequence, read N- to C-terminus: Aspartic proteinase (496 aa).

An N-terminal signal peptide occupies residues methionine 1–alanine 24. Residues serine 25–threonine 59 constitute a propeptide, activation peptide. A Peptidase A1 domain is found at tyrosine 77–alanine 493. Aspartate 95 is a catalytic residue. 2 disulfides stabilise this stretch: cysteine 108/cysteine 114 and cysteine 273/cysteine 277. Residue aspartate 282 is part of the active site. Positions isoleucine 307 to proline 407 constitute a Saposin B-type domain. 4 disulfide bridges follow: cysteine 312–cysteine 401, cysteine 337–cysteine 373, cysteine 343–cysteine 370, and cysteine 415–cysteine 452. N-linked (GlcNAc...) asparagine glycosylation occurs at asparagine 387.

The protein belongs to the peptidase A1 family.

It is found in the vacuole. Involved in the breakdown of propeptides of storage proteins in protein-storage vacuoles. This Oryza sativa subsp. japonica (Rice) protein is Aspartic proteinase (RAP).